Here is a 493-residue protein sequence, read N- to C-terminus: Galactose-1-phosphate uridylyltransferase 2 (493 aa).

It belongs to the galactose-1-phosphate uridylyltransferase type 2 family.

The protein localises to the cytoplasm. It catalyses the reaction alpha-D-galactose 1-phosphate + UDP-alpha-D-glucose = alpha-D-glucose 1-phosphate + UDP-alpha-D-galactose. Its pathway is carbohydrate metabolism; galactose metabolism. The sequence is that of Galactose-1-phosphate uridylyltransferase 2 (galT2) from Streptococcus pneumoniae (strain ATCC BAA-255 / R6).